A 1099-amino-acid polypeptide reads, in one-letter code: Exonuclease/helicase subunit RexB (1099 aa).

Residues Cys766, Cys1056, Cys1059, and Cys1065 each coordinate [4Fe-4S] cluster.

It belongs to the helicase family. AddB/RexB type 2 subfamily. As to quaternary structure, heterodimer of RexA (AddA) and RexB. The cofactor is Mg(2+). [4Fe-4S] cluster serves as cofactor.

Functionally, the heterodimer acts both as an ATP-dependent DNA helicase and an ATP-dependent, dual-direction single-stranded exonuclease. Recognizes the L.lactis chi site (5'-GCGCGTG-3'), which stimulates homologous recombination. This subunit has 5'-&gt;3' exonuclease activity. Its function is as follows. The heterodimer acts as both an ATP-dependent DNA helicase and an ATP-dependent, dual-direction single-stranded exonuclease. Recognizes the chi site generating a DNA molecule suitable for the initiation of homologous recombination. This subunit has 5' -&gt; 3' nuclease activity but not helicase activity. The sequence is that of Exonuclease/helicase subunit RexB from Lactococcus lactis subsp. cremoris (strain MG1363).